The primary structure comprises 686 residues: XK-related protein 5 (686 aa).

5 helical membrane-spanning segments follow: residues 33–53, 205–225, 239–259, 265–285, and 297–317; these read LLWG…QALS, HFWV…WLVA, LFNL…WDSP, VTFY…ATDF, and IAGV…YYSL. Disordered stretches follow at residues 340–362, 444–470, and 490–589; these read DKTE…ESSG, LQRK…NSSA, and FASD…VGLA. Polar residues-rich tracts occupy residues 455-470 and 490-509; these read LPSS…NSSA and FASD…TQGE. The segment covering 523-536 has biased composition (gly residues); that stretch reads QGKGTGGQQRGGEG. Over residues 550–567 the composition is skewed to polar residues; the sequence is VATSSQQEGSPATLQTAH.

The protein belongs to the XK family.

The protein resides in the cell membrane. The polypeptide is XK-related protein 5 (Pan troglodytes (Chimpanzee)).